Reading from the N-terminus, the 343-residue chain is Dipeptide transport system permease protein DppC (343 aa).

A run of 5 helical transmembrane segments spans residues 44–64 (LVAMWIIAITLVFSVISAFVV), 144–164 (LIIALAAALIDLVIGVTYGII), 195–215 (LALLLGQGISSIIIAIGLFAW), 259–279 (GVIVVQIMFDIPSMIMYEAVL), and 309–329 (FQLIIPAIVLSVLSLTFIFFG). In terms of domain architecture, ABC transmembrane type-1 spans 140 to 329 (LRISLIIALA…VLSLTFIFFG (190 aa)).

This sequence belongs to the binding-protein-dependent transport system permease family. OppBC subfamily. The complex is composed of two ATP-binding proteins (DppD and DppF), two transmembrane proteins (DppB and DppC) and a solute-binding protein (DppA).

Its subcellular location is the cell membrane. Its function is as follows. Part of the ABC transporter DppABCDF involved in dipeptide transport. Responsible for the translocation of the substrate across the membrane. This chain is Dipeptide transport system permease protein DppC, found in Lactococcus lactis subsp. cremoris (strain MG1363).